We begin with the raw amino-acid sequence, 329 residues long: Gamma-resorcylate decarboxylase (329 aa).

4 residues coordinate Zn(2+): E8, H10, H167, and D290. D290 is a catalytic residue.

This sequence belongs to the metallo-dependent hydrolases superfamily. ACMSD family. Zn(2+) is required as a cofactor.

It catalyses the reaction 2,6-dihydroxybenzoate + H(+) = resorcinol + CO2. It participates in aromatic compound metabolism. Its function is as follows. Involved in the gamma-resorcylate (2,6-dihydroxybenzoate) catabolism. Catalyzes the reversible decarboxylation of gamma-resorcylate to resorcinol. The sequence is that of Gamma-resorcylate decarboxylase from Rhodococcus jostii (strain RHA1).